A 123-amino-acid polypeptide reads, in one-letter code: Large ribosomal subunit protein eL8 (123 aa).

It belongs to the eukaryotic ribosomal protein eL8 family. As to quaternary structure, part of the 50S ribosomal subunit. Probably part of the RNase P complex.

It is found in the cytoplasm. Its function is as follows. Multifunctional RNA-binding protein that recognizes the K-turn motif in ribosomal RNA, the RNA component of RNase P, box H/ACA, box C/D and box C'/D' sRNAs. The protein is Large ribosomal subunit protein eL8 of Methanobrevibacter smithii (strain ATCC 35061 / DSM 861 / OCM 144 / PS).